The sequence spans 648 residues: Mitochondrial Rho GTPase 3 (648 aa).

Over 1–621 (MWMGVGDSSG…KRSCKLNNRS (621 aa)) the chain is Cytoplasmic. The residue at position 11 (serine 11) is a Phosphoserine. Residues 12–179 (PKPIRIVVVG…LYYAQKAVID (168 aa)) enclose the Miro 1 domain. EF-hand domains are found at residues 195 to 230 (RCIA…CFDT) and 316 to 351 (VAIE…APES). Residues aspartate 208, asparagine 210, aspartate 212, glutamate 219, aspartate 329, asparagine 331, aspartate 333, asparagine 335, and glutamate 340 each contribute to the Ca(2+) site. Residues 425-599 (RKVVQCFVFG…FRKILTAAEN (175 aa)) form the Miro 2 domain. A helical membrane pass occupies residues 622-644 (LMAVSIGTAVLIAGLASFRLYTA). The Mitochondrial intermembrane segment spans residues 645-648 (RKQS).

This sequence belongs to the mitochondrial Rho GTPase family. In terms of tissue distribution, expressed at very low levels in roots, leaves, stems, flowers and siliques.

The protein resides in the mitochondrion outer membrane. In terms of biological role, mitochondrial GTPase that may be involved in mitochondrion development. This chain is Mitochondrial Rho GTPase 3, found in Arabidopsis thaliana (Mouse-ear cress).